The sequence spans 517 residues: ATP synthase subunit alpha (517 aa).

Residue 174–181 (GDRQTGKT) participates in ATP binding.

The protein belongs to the ATPase alpha/beta chains family. In terms of assembly, F-type ATPases have 2 components, CF(1) - the catalytic core - and CF(0) - the membrane proton channel. CF(1) has five subunits: alpha(3), beta(3), gamma(1), delta(1), epsilon(1). CF(0) has four main subunits: a(1), b(1), b'(1) and c(9-12).

Its subcellular location is the cell inner membrane. It carries out the reaction ATP + H2O + 4 H(+)(in) = ADP + phosphate + 5 H(+)(out). Functionally, produces ATP from ADP in the presence of a proton gradient across the membrane. The alpha chain is a regulatory subunit. This is ATP synthase subunit alpha from Methylibium petroleiphilum (strain ATCC BAA-1232 / LMG 22953 / PM1).